Here is a 329-residue protein sequence, read N- to C-terminus: Quinone oxidoreductase (329 aa).

A2 is modified (N-acetylalanine). Position 23 is an N6-acetyllysine (K23). Residues Y53, 158 to 161 (SGGV), G181, H200, N229, 246 to 249 (VGSR), and 269 to 271 (VAL) contribute to the NADP(+) site. Residue S248 is modified to Phosphoserine.

The protein belongs to the zinc-containing alcohol dehydrogenase family. Quinone oxidoreductase subfamily. As to quaternary structure, homotetramer.

It localises to the cytoplasm. It catalyses the reaction 2 a quinone + NADPH + H(+) = 2 a 1,4-benzosemiquinone + NADP(+). In terms of biological role, does not have alcohol dehydrogenase activity. Binds NADP and acts through a one-electron transfer process. Orthoquinones, such as 1,2-naphthoquinone or 9,10-phenanthrenequinone, are the best substrates (in vitro). May act in the detoxification of xenobiotics. Interacts with (AU)-rich elements (ARE) in the 3'-UTR of target mRNA species and enhances their stability. NADPH binding interferes with mRNA binding. This is Quinone oxidoreductase (CRYZ) from Sus scrofa (Pig).